Consider the following 160-residue polypeptide: Anaerobic nitrite reductase Glb1-1 (160 aa).

A Globin domain is found at 8–157 (GFTEEQEALV…LVNAIKSEMK (150 aa)). A Homodimerization motif is present at residues 41-45 (EIAPS). Residues Ser51, Lys65, His69, Lys99, and His104 each coordinate heme b. Residues 111-123 (DEHFEVTKFALLE) carry the Homodimerization motif.

It belongs to the plant globin family. Homodimer. Requires heme b as cofactor.

The enzyme catalyses Fe(III)-heme b-[protein] + nitric oxide + H2O = Fe(II)-heme b-[protein] + nitrite + 2 H(+). In terms of biological role, phytoglobin that reduces nitrite to nitric oxide (NO) under anoxic conditions (e.g. during flooding or in waterlogged soil) and upon root nodulation. Required for general plant development and during nodulation, especially for the onset of symbiosis. Monitors nitric oxide (NO) levels during early phase of the nitrogen-fixing symbiosis and buffers oxygen in functioning nodules. May not function as an oxygen storage or transport protein. Has an unusually high affinity for O(2) through a hexacoordinate heme iron because of a very low dissociation constant. This Medicago truncatula (Barrel medic) protein is Anaerobic nitrite reductase Glb1-1.